The following is a 343-amino-acid chain: Ferredoxin--NADP reductase (343 aa).

7 residues coordinate FAD: aspartate 31, lysine 39, tyrosine 43, valine 83, isoleucine 118, aspartate 285, and serine 326.

It belongs to the ferredoxin--NADP reductase type 2 family. As to quaternary structure, homodimer. Requires FAD as cofactor.

It carries out the reaction 2 reduced [2Fe-2S]-[ferredoxin] + NADP(+) + H(+) = 2 oxidized [2Fe-2S]-[ferredoxin] + NADPH. The sequence is that of Ferredoxin--NADP reductase from Staphylococcus saprophyticus subsp. saprophyticus (strain ATCC 15305 / DSM 20229 / NCIMB 8711 / NCTC 7292 / S-41).